Here is a 419-residue protein sequence, read N- to C-terminus: MTTQLEQAWELAKQRFAAVGIDVEEALRQLDRLPVSMHCWQGDDVSGFENPEGSLTGGIQATGNYPGKARNASELRADLEQAMRLIPGPKRLNLHAIYLESDTPVSRDQIKPEHFKNWVEWAKANQLGLDFNPSCFSHPLSADGFTLSHPDDSIRQFWIDHCKASRRVSAYFGEQLGTPSVMNIWIPDGMKDITVDRLAPRQRLLAALDEVISEKLNPAHHIDAVESKLFGIGAESYTVGSNEFYMGYATSRQTALCLDAGHFHPTEVISDKISAAMLYVPQLLLHVSRPVRWDSDHVVLLDDETQAIASEIVRHDLFDRVHIGLDFFDASINRIAAWVIGTRNMKKALLRALLEPTAELRKLEAAGDYTARLALLEEQKSLPRQAVWEMYCQHHDTPAGSEWLESVRAYEKAILSQRG.

Mn(2+) contacts are provided by His262, Asp294, and Asp296.

This sequence belongs to the rhamnose isomerase family. Homotetramer. The cofactor is Mn(2+).

It localises to the cytoplasm. It carries out the reaction L-rhamnopyranose = L-rhamnulose. It functions in the pathway carbohydrate degradation; L-rhamnose degradation; glycerone phosphate from L-rhamnose: step 1/3. Its function is as follows. Catalyzes the interconversion of L-rhamnose and L-rhamnulose. This chain is L-rhamnose isomerase, found in Shigella flexneri.